Reading from the N-terminus, the 60-residue chain is Cytotoxin 1 (60 aa).

Disulfide bonds link Cys3–Cys21, Cys14–Cys38, Cys42–Cys53, and Cys54–Cys59.

It belongs to the three-finger toxin family. Short-chain subfamily. Type IA cytotoxin sub-subfamily. Monomer in solution; Homodimer and oligomer in the presence of negatively charged lipids forming a pore with a size ranging between 20 and 30 Angstroms. Expressed by the venom gland.

The protein resides in the secreted. Its subcellular location is the target cell membrane. Produces complete blockade of auricular contraction, which is irreversible at high concentrations. Induces apoptosis in leukemic cells. Possesses anti-arthritic and anti-inflammatory potential. In Naja kaouthia (Monocled cobra), this protein is Cytotoxin 1.